Reading from the N-terminus, the 953-residue chain is UvrABC system protein A (953 aa).

An ATP-binding site is contributed by glycine 33–serine 40. ABC transporter domains are found at residues tryptophan 320 to isoleucine 599 and glycine 619 to lysine 949. Residue glycine 652 to serine 659 participates in ATP binding. Residues cysteine 752 to cysteine 778 form a C4-type zinc finger.

This sequence belongs to the ABC transporter superfamily. UvrA family. Forms a heterotetramer with UvrB during the search for lesions.

The protein resides in the cytoplasm. Its function is as follows. The UvrABC repair system catalyzes the recognition and processing of DNA lesions. UvrA is an ATPase and a DNA-binding protein. A damage recognition complex composed of 2 UvrA and 2 UvrB subunits scans DNA for abnormalities. When the presence of a lesion has been verified by UvrB, the UvrA molecules dissociate. This Rickettsia prowazekii (strain Madrid E) protein is UvrABC system protein A.